Consider the following 434-residue polypeptide: MSTKNEQLFLQAKKHIPGGVNSPVRAFAGVGGTPVFMHKAAGSKIYDTEDNEYIDYVGSWGPMILGHAHPKVIEAVKAAADDGLSFGTPTTFETSVADIICDIVPSVEMIRMTSSGTEATMSAIRLARGYTGRDKIVKFEGCYHGHSDSLLVKAGSGMLDIGEPTSQGVPADFAKHTITLPYNDPQAIKDCFEKWGDEIACVIVEPIAGNMNMIVPSQEFHDTLRAQCTQGGAVLIFDEVMTGFRVGLKGAQAHFGIEPDLICFGKIIGAGLPVGAFGGKREIMECIAPMGGVYQAGTLSGNPLAMRAGIAMFEDLTVEGFYEGVADKVTYLVEGIQAAAHKHGIKLRSTKLGGMFGLFFVKDEATGVPQNFDEVTACDMDKFNTFFHGMLDRGIYLAPSAYEVGFMSSKHTTEDLDATIKAADDVFAEMSAAS.

The residue at position 266 (K266) is an N6-(pyridoxal phosphate)lysine.

It belongs to the class-III pyridoxal-phosphate-dependent aminotransferase family. HemL subfamily. Homodimer. Pyridoxal 5'-phosphate serves as cofactor.

The protein resides in the cytoplasm. It carries out the reaction (S)-4-amino-5-oxopentanoate = 5-aminolevulinate. It functions in the pathway porphyrin-containing compound metabolism; protoporphyrin-IX biosynthesis; 5-aminolevulinate from L-glutamyl-tRNA(Glu): step 2/2. This Psychrobacter sp. (strain PRwf-1) protein is Glutamate-1-semialdehyde 2,1-aminomutase.